The primary structure comprises 513 residues: Na(+)/H(+) antiporter NhaB (513 aa).

The next 12 membrane-spanning stretches (helical) occupy residues 23–43 (LALIIFLIVNPLIFLISPFVA), 52–72 (IFTLAMALKCYPLLPGGLLAI), 97–117 (LLLMFMVAGIYFMKQLLLFIF), 120–140 (LLLSIRSKMLLSLSFCVAAAF), 144–164 (FLDALTVVAVVISVAVGFYGI), 202–222 (LMMHAGVGTALGGVMTMVGEP), 238–258 (FFLRMSPVTVPVLICGLLTCL), 303–323 (AIIGVWLVTALALHLAEVGLI), 348–368 (TESLPFTALLTVFFSVVAVII), 391–411 (LFYIFNGLLSSISDNVFVGTI), 447–467 (ATPNGQAAFLFLLTSALAPLI), and 475–495 (VWMALPYTLVLTVAGLLCVEF).

The protein belongs to the NhaB Na(+)/H(+) (TC 2.A.34) antiporter family.

It localises to the cell inner membrane. It carries out the reaction 2 Na(+)(in) + 3 H(+)(out) = 2 Na(+)(out) + 3 H(+)(in). Functionally, na(+)/H(+) antiporter that extrudes sodium in exchange for external protons. The chain is Na(+)/H(+) antiporter NhaB from Escherichia coli O127:H6 (strain E2348/69 / EPEC).